A 499-amino-acid chain; its full sequence is Maturase K (499 aa).

It belongs to the intron maturase 2 family. MatK subfamily.

The protein localises to the plastid. It is found in the chloroplast. In terms of biological role, usually encoded in the trnK tRNA gene intron. Probably assists in splicing its own and other chloroplast group II introns. The protein is Maturase K of Chamaecrista fasciculata (Showy partridge pea).